Reading from the N-terminus, the 302-residue chain is Probable 2-(5''-triphosphoribosyl)-3'-dephosphocoenzyme-A synthase (302 aa).

The protein belongs to the CitG/MdcB family.

It catalyses the reaction 3'-dephospho-CoA + ATP = 2'-(5''-triphospho-alpha-D-ribosyl)-3'-dephospho-CoA + adenine. This chain is Probable 2-(5''-triphosphoribosyl)-3'-dephosphocoenzyme-A synthase, found in Albidiferax ferrireducens (strain ATCC BAA-621 / DSM 15236 / T118) (Rhodoferax ferrireducens).